A 282-amino-acid chain; its full sequence is NADPH-dependent 7-cyano-7-deazaguanine reductase (282 aa).

Position 88-90 (88-90) interacts with substrate; the sequence is IES. Position 90 to 91 (90 to 91) interacts with NADPH; the sequence is SK. Residue cysteine 190 is the Thioimide intermediate of the active site. Catalysis depends on aspartate 197, which acts as the Proton donor. 229-230 contributes to the substrate binding site; the sequence is HE. 258-259 provides a ligand contact to NADPH; that stretch reads RG.

This sequence belongs to the GTP cyclohydrolase I family. QueF type 2 subfamily. As to quaternary structure, homodimer.

The protein localises to the cytoplasm. It catalyses the reaction 7-aminomethyl-7-carbaguanine + 2 NADP(+) = 7-cyano-7-deazaguanine + 2 NADPH + 3 H(+). It functions in the pathway tRNA modification; tRNA-queuosine biosynthesis. Functionally, catalyzes the NADPH-dependent reduction of 7-cyano-7-deazaguanine (preQ0) to 7-aminomethyl-7-deazaguanine (preQ1). The sequence is that of NADPH-dependent 7-cyano-7-deazaguanine reductase from Escherichia coli O157:H7.